Here is a 203-residue protein sequence, read N- to C-terminus: Phospho-2-dehydro-3-deoxyheptonate aldolase (203 aa).

Residues 1 to 10 show a composition bias toward basic and acidic residues; the sequence is MIDRLVRDSR. Residues 1–28 are disordered; it reads MIDRLVRDSRGPVTERNPPHMSLSAGPA.

The protein belongs to the class-I DAHP synthase family.

The enzyme catalyses D-erythrose 4-phosphate + phosphoenolpyruvate + H2O = 7-phospho-2-dehydro-3-deoxy-D-arabino-heptonate + phosphate. Its pathway is metabolic intermediate biosynthesis; chorismate biosynthesis; chorismate from D-erythrose 4-phosphate and phosphoenolpyruvate: step 1/7. Its function is as follows. Stereospecific condensation of phosphoenolpyruvate (PEP) and D-erythrose-4-phosphate (E4P) giving rise to 3-deoxy-D-arabino-heptulosonate-7-phosphate (DAHP). The chain is Phospho-2-dehydro-3-deoxyheptonate aldolase (aroA) from Amycolatopsis methanolica.